Reading from the N-terminus, the 368-residue chain is Phospho-N-acetylmuramoyl-pentapeptide-transferase (368 aa).

Helical transmembrane passes span 32 to 52 (TGGAVVTGALFVFLFGPWIID), 79 to 99 (TPTMGGLMILSGLVVSTVLWA), 102 to 122 (LNPYVWIVLAVTLGFGLIGFY), 142 to 160 (LLLELLIALAACYALTRLG), 176 to 196 (VALDLGWFFLGFGAFIIVGAG), 207 to 227 (GLAIVPVMIAAASFAMIAYLA), 244 to 264 (AGELAVLCGAVLGAGLGFLWF), 271 to 291 (IFMGDTGSLALGGMLGSIAVA), 296 to 316 (IVLAVIGGLFVLEAVSVIVQV), and 345 to 365 (QIVIRFWIISVMLALAGLSTL).

The protein belongs to the glycosyltransferase 4 family. MraY subfamily. Mg(2+) is required as a cofactor.

The protein resides in the cell inner membrane. It catalyses the reaction UDP-N-acetyl-alpha-D-muramoyl-L-alanyl-gamma-D-glutamyl-meso-2,6-diaminopimeloyl-D-alanyl-D-alanine + di-trans,octa-cis-undecaprenyl phosphate = di-trans,octa-cis-undecaprenyl diphospho-N-acetyl-alpha-D-muramoyl-L-alanyl-D-glutamyl-meso-2,6-diaminopimeloyl-D-alanyl-D-alanine + UMP. It functions in the pathway cell wall biogenesis; peptidoglycan biosynthesis. In terms of biological role, catalyzes the initial step of the lipid cycle reactions in the biosynthesis of the cell wall peptidoglycan: transfers peptidoglycan precursor phospho-MurNAc-pentapeptide from UDP-MurNAc-pentapeptide onto the lipid carrier undecaprenyl phosphate, yielding undecaprenyl-pyrophosphoryl-MurNAc-pentapeptide, known as lipid I. The protein is Phospho-N-acetylmuramoyl-pentapeptide-transferase of Nitrobacter winogradskyi (strain ATCC 25391 / DSM 10237 / CIP 104748 / NCIMB 11846 / Nb-255).